The sequence spans 279 residues: Large ribosomal subunit protein uL2 (279 aa).

The segment at 223 to 279 (PVAMNPVDHPMGGGEGRASGGHPRSRKGLPAKGFKTRSRTKASNKYIVERRKTRKKK) is disordered. The segment covering 245 to 264 (PRSRKGLPAKGFKTRSRTKA) has biased composition (basic residues).

It belongs to the universal ribosomal protein uL2 family. As to quaternary structure, part of the 50S ribosomal subunit. Forms a bridge to the 30S subunit in the 70S ribosome.

One of the primary rRNA binding proteins. Required for association of the 30S and 50S subunits to form the 70S ribosome, for tRNA binding and peptide bond formation. It has been suggested to have peptidyltransferase activity; this is somewhat controversial. Makes several contacts with the 16S rRNA in the 70S ribosome. This chain is Large ribosomal subunit protein uL2, found in Christiangramia forsetii (strain DSM 17595 / CGMCC 1.15422 / KT0803) (Gramella forsetii).